Reading from the N-terminus, the 138-residue chain is rRNA methyltransferase 1, mitochondrial (138 aa).

The transit peptide at 1–21 directs the protein to the mitochondrion; sequence MNNQPCSIVWRRFLTSKVKPA. The disordered stretch occupies residues 92 to 113; the sequence is KQDILSSKRQQEEHKSKYSRKS.

It belongs to the class IV-like SAM-binding methyltransferase superfamily. RNA methyltransferase TrmH family.

The protein resides in the mitochondrion. The enzyme catalyses a guanosine in 21S rRNA + S-adenosyl-L-methionine = a 2'-O-methylguanosine in 21S rRNA + S-adenosyl-L-homocysteine + H(+). In terms of biological role, S-adenosyl-L-methionine-dependent 2'-O-ribose methyltransferase that catalyzes the formation of the 2'-O-methylguanosine corresponding to position 2270 in S.cerevisiae 21S mitochondrial large ribosomal RNA, a universally conserved modification in the peptidyl transferase domain of the 21S rRNA. This Lachancea kluyveri (strain ATCC 58438 / CBS 3082 / BCRC 21498 / NBRC 1685 / JCM 7257 / NCYC 543 / NRRL Y-12651) (Yeast) protein is rRNA methyltransferase 1, mitochondrial.